Consider the following 371-residue polypeptide: tRNA-specific 2-thiouridylase MnmA (371 aa).

Residues glycine 16–serine 23 and methionine 42 contribute to the ATP site. Residues asparagine 102–aspartate 104 form an interaction with target base in tRNA region. Residue cysteine 107 is the Nucleophile of the active site. The cysteines at positions 107 and 204 are disulfide-linked. ATP is bound at residue glycine 132. An interaction with tRNA region spans residues lysine 154 to glutamine 156. The active-site Cysteine persulfide intermediate is the cysteine 204. The segment at arginine 316–tyrosine 317 is interaction with tRNA.

This sequence belongs to the MnmA/TRMU family.

It is found in the cytoplasm. It catalyses the reaction S-sulfanyl-L-cysteinyl-[protein] + uridine(34) in tRNA + AH2 + ATP = 2-thiouridine(34) in tRNA + L-cysteinyl-[protein] + A + AMP + diphosphate + H(+). In terms of biological role, catalyzes the 2-thiolation of uridine at the wobble position (U34) of tRNA, leading to the formation of s(2)U34. The protein is tRNA-specific 2-thiouridylase MnmA of Shewanella pealeana (strain ATCC 700345 / ANG-SQ1).